Here is a 309-residue protein sequence, read N- to C-terminus: Aspartate carbamoyltransferase catalytic subunit (309 aa).

Carbamoyl phosphate is bound by residues Arg55 and Thr56. Lys85 is a binding site for L-aspartate. Carbamoyl phosphate is bound by residues Arg106, His135, and Gln138. Residues Arg168 and Arg230 each contribute to the L-aspartate site. The carbamoyl phosphate site is built by Leu268 and Pro269.

This sequence belongs to the aspartate/ornithine carbamoyltransferase superfamily. ATCase family. Heterododecamer (2C3:3R2) of six catalytic PyrB chains organized as two trimers (C3), and six regulatory PyrI chains organized as three dimers (R2).

It carries out the reaction carbamoyl phosphate + L-aspartate = N-carbamoyl-L-aspartate + phosphate + H(+). It participates in pyrimidine metabolism; UMP biosynthesis via de novo pathway; (S)-dihydroorotate from bicarbonate: step 2/3. Catalyzes the condensation of carbamoyl phosphate and aspartate to form carbamoyl aspartate and inorganic phosphate, the committed step in the de novo pyrimidine nucleotide biosynthesis pathway. This is Aspartate carbamoyltransferase catalytic subunit from Vibrio campbellii (strain ATCC BAA-1116).